Reading from the N-terminus, the 543-residue chain is Chaperonin GroEL (543 aa).

ATP contacts are provided by residues 29–32, 86–90, glycine 413, 478–480, and aspartate 494; these read TLGP, DGTTT, and NAA.

It belongs to the chaperonin (HSP60) family. In terms of assembly, forms a cylinder of 14 subunits composed of two heptameric rings stacked back-to-back. Interacts with the co-chaperonin GroES.

Its subcellular location is the cytoplasm. It catalyses the reaction ATP + H2O + a folded polypeptide = ADP + phosphate + an unfolded polypeptide.. Together with its co-chaperonin GroES, plays an essential role in assisting protein folding. The GroEL-GroES system forms a nano-cage that allows encapsulation of the non-native substrate proteins and provides a physical environment optimized to promote and accelerate protein folding. In Lactobacillus gasseri (strain ATCC 33323 / DSM 20243 / BCRC 14619 / CIP 102991 / JCM 1131 / KCTC 3163 / NCIMB 11718 / NCTC 13722 / AM63), this protein is Chaperonin GroEL.